A 392-amino-acid polypeptide reads, in one-letter code: Phosphoglycerate kinase (392 aa).

Residues 19 to 21 (DYN), Arg34, 57 to 60 (HLGR), Arg116, and Arg149 contribute to the substrate site. Residues Lys199, Glu321, and 347–350 (GGDS) each bind ATP.

This sequence belongs to the phosphoglycerate kinase family. Monomer.

The protein localises to the cytoplasm. The catalysed reaction is (2R)-3-phosphoglycerate + ATP = (2R)-3-phospho-glyceroyl phosphate + ADP. It functions in the pathway carbohydrate degradation; glycolysis; pyruvate from D-glyceraldehyde 3-phosphate: step 2/5. The protein is Phosphoglycerate kinase of Thermomicrobium roseum (strain ATCC 27502 / DSM 5159 / P-2).